The primary structure comprises 609 residues: Probable G-protein coupled receptor 153 (609 aa).

Residues methionine 1 to alanine 11 are Extracellular-facing. A helical transmembrane segment spans residues valine 12–valine 32. Topologically, residues glycine 33–proline 41 are cytoplasmic. A helical transmembrane segment spans residues leucine 42–alanine 62. Topologically, residues threonine 63–lysine 84 are extracellular. The chain crosses the membrane as a helical span at residues valine 85 to serine 105. The Cytoplasmic segment spans residues tyrosine 106–glutamine 126. The helical transmembrane segment at alanine 127–valine 147 threads the bilayer. Over glycine 148–cysteine 175 the chain is Extracellular. Residues phenylalanine 176–phenylalanine 196 form a helical membrane-spanning segment. Topologically, residues glutamine 197–threonine 243 are cytoplasmic. Residues glycine 244 to valine 264 traverse the membrane as a helical segment. The Extracellular segment spans residues serine 265 to proline 276. Residues tryptophan 277–leucine 297 traverse the membrane as a helical segment. The Cytoplasmic segment spans residues tryptophan 298–serine 609. Disordered regions lie at residues aspartate 446–alanine 496 and alanine 514–serine 609. Composition is skewed to low complexity over residues glutamate 458–proline 479 and alanine 527–glutamate 536. Residues glutamate 571 to serine 583 are compositionally biased toward gly residues. Over residues threonine 584–glycine 596 the composition is skewed to low complexity.

Belongs to the G-protein coupled receptor 1 family.

It localises to the cell membrane. Orphan receptor. This Homo sapiens (Human) protein is Probable G-protein coupled receptor 153 (GPR153).